A 490-amino-acid polypeptide reads, in one-letter code: Ribosomal L1 domain-containing protein 1 (490 aa).

N-acetylmethionine is present on Met-1. Positions 1–27 are enriched in low complexity; it reads MEDSASASLSSAAATGTSTSTPAAPTA. The tract at residues 1-33 is disordered; that stretch reads MEDSASASLSSAAATGTSTSTPAAPTARKQLDK. Residues Lys-120 and Lys-254 each participate in a glycyl lysine isopeptide (Lys-Gly) (interchain with G-Cter in SUMO2) cross-link. Basic residues predominate over residues 280-293; sequence LNKKKKEARRKRRE. Positions 280 to 313 form a coiled coil; that stretch reads LNKKKKEARRKRRERNFEKQKERKKKRQQARKTA. The tract at residues 280–490 is disordered; it reads LNKKKKEARR…PKKPKVPQST (211 aa). Residues 329–343 show a composition bias toward basic and acidic residues; sequence TVKKPESKKEQTPEH. A Phosphothreonine modification is found at Thr-340. A compositionally biased stretch (basic residues) spans 344 to 353; that stretch reads GKKKRGRGKA. Thr-358 carries the post-translational modification Phosphothreonine. Position 361 is a phosphoserine (Ser-361). Thr-375 bears the Phosphothreonine mark. Residues 376 to 385 are compositionally biased toward basic and acidic residues; sequence PANEKVEIQK. Lys-380 is covalently cross-linked (Glycyl lysine isopeptide (Lys-Gly) (interchain with G-Cter in SUMO2)). Phosphoserine occurs at positions 392 and 396. Thr-415 and Thr-423 each carry phosphothreonine. Phosphoserine is present on Ser-427. Basic and acidic residues predominate over residues 427–460; it reads SPEKKPKIKEEAVKEKSPSLGKKDARQTPKKPEA. A Glycyl lysine isopeptide (Lys-Gly) (interchain with G-Cter in SUMO2) cross-link involves residue Lys-435. Ser-443 bears the Phosphoserine mark. Lys-461 is covalently cross-linked (Glycyl lysine isopeptide (Lys-Gly) (interchain with G-Cter in SUMO2)). Thr-465 carries the phosphothreonine modification. Lys-468 bears the N6-acetyllysine mark. Ser-469 bears the Phosphoserine mark. A compositionally biased stretch (basic residues) spans 469–490; that stretch reads SVRKASHTPKKWPKKPKVPQST.

The protein belongs to the universal ribosomal protein uL1 family. Highly divergent. In terms of assembly, interacts with ING1 (isoform 2). Interacts with KPNA7 and KPNA2. Expressed at high intensities in the heart, skeletal muscle, and placenta.

It localises to the nucleus. It is found in the nucleolus. In terms of biological role, regulates cellular senescence through inhibition of PTEN translation. Acts as a pro-apoptotic regulator in response to DNA damage. The protein is Ribosomal L1 domain-containing protein 1 (RSL1D1) of Homo sapiens (Human).